Reading from the N-terminus, the 163-residue chain is NAD(P)H-quinone oxidoreductase subunit I, chloroplastic (163 aa).

2 4Fe-4S ferredoxin-type domains span residues 55–84 (GRIHFEFDKCIACEVCVRVCPIDLPVVDWR) and 95–124 (LNYSIDFGVCIFCGNCVEYCPTNCLSMTEE). Positions 64, 67, 70, 74, 104, 107, 110, and 114 each coordinate [4Fe-4S] cluster.

Belongs to the complex I 23 kDa subunit family. NDH is composed of at least 16 different subunits, 5 of which are encoded in the nucleus. [4Fe-4S] cluster serves as cofactor.

The protein localises to the plastid. It is found in the chloroplast thylakoid membrane. The enzyme catalyses a plastoquinone + NADH + (n+1) H(+)(in) = a plastoquinol + NAD(+) + n H(+)(out). It catalyses the reaction a plastoquinone + NADPH + (n+1) H(+)(in) = a plastoquinol + NADP(+) + n H(+)(out). In terms of biological role, NDH shuttles electrons from NAD(P)H:plastoquinone, via FMN and iron-sulfur (Fe-S) centers, to quinones in the photosynthetic chain and possibly in a chloroplast respiratory chain. The immediate electron acceptor for the enzyme in this species is believed to be plastoquinone. Couples the redox reaction to proton translocation, and thus conserves the redox energy in a proton gradient. This chain is NAD(P)H-quinone oxidoreductase subunit I, chloroplastic (ndhI), found in Phoenix dactylifera (Date palm).